The sequence spans 248 residues: Probable transcriptional regulatory protein RPB_4273 (248 aa).

Positions 1-22 (MAGHSQFKNIMHRKGKQDAQRS) are disordered.

Belongs to the TACO1 family.

Its subcellular location is the cytoplasm. This Rhodopseudomonas palustris (strain HaA2) protein is Probable transcriptional regulatory protein RPB_4273.